The primary structure comprises 151 residues: Ribosome maturation factor RimP (151 aa).

It belongs to the RimP family.

The protein resides in the cytoplasm. Functionally, required for maturation of 30S ribosomal subunits. This Haemophilus influenzae (strain 86-028NP) protein is Ribosome maturation factor RimP.